Reading from the N-terminus, the 545-residue chain is Thermosome subunit (545 aa).

Belongs to the TCP-1 chaperonin family. Forms an oligomeric complex of eight-membered rings.

In terms of biological role, molecular chaperone; binds unfolded polypeptides in vitro, and has a weak ATPase activity. The protein is Thermosome subunit (ths) of Desulfurococcus sp. (strain SY).